Here is a 229-residue protein sequence, read N- to C-terminus: Orotate phosphoribosyltransferase (229 aa).

5-phospho-alpha-D-ribose 1-diphosphate contacts are provided by residues Arg-107, Lys-108, Lys-111, His-113, and 133–141 (EDLTTAGGS). Thr-137 contacts orotate.

It belongs to the purine/pyrimidine phosphoribosyltransferase family. PyrE subfamily. As to quaternary structure, homodimer. Mg(2+) serves as cofactor.

It carries out the reaction orotidine 5'-phosphate + diphosphate = orotate + 5-phospho-alpha-D-ribose 1-diphosphate. It participates in pyrimidine metabolism; UMP biosynthesis via de novo pathway; UMP from orotate: step 1/2. Catalyzes the transfer of a ribosyl phosphate group from 5-phosphoribose 1-diphosphate to orotate, leading to the formation of orotidine monophosphate (OMP). This is Orotate phosphoribosyltransferase from Rhizobium johnstonii (strain DSM 114642 / LMG 32736 / 3841) (Rhizobium leguminosarum bv. viciae).